A 411-amino-acid polypeptide reads, in one-letter code: Adenylosuccinate synthetase (411 aa).

GTP contacts are provided by residues 11-17 and 39-41; these read GDEGKGK and GHT. The active-site Proton acceptor is Asp-12. Positions 12 and 39 each coordinate Mg(2+). IMP is bound by residues 12–15, 37–40, Thr-121, Arg-135, Gln-215, Thr-230, and Arg-294; these read DEGK and NAGH. His-40 functions as the Proton donor in the catalytic mechanism. 290–296 contacts substrate; it reads TTTKRPR. GTP is bound by residues Arg-296, 322–324, and 400–402; these read KLD and STS.

This sequence belongs to the adenylosuccinate synthetase family. As to quaternary structure, homodimer. The cofactor is Mg(2+).

The protein localises to the cytoplasm. The enzyme catalyses IMP + L-aspartate + GTP = N(6)-(1,2-dicarboxyethyl)-AMP + GDP + phosphate + 2 H(+). The protein operates within purine metabolism; AMP biosynthesis via de novo pathway; AMP from IMP: step 1/2. In terms of biological role, plays an important role in the de novo pathway of purine nucleotide biosynthesis. Catalyzes the first committed step in the biosynthesis of AMP from IMP. This is Adenylosuccinate synthetase from Helicobacter pylori (strain J99 / ATCC 700824) (Campylobacter pylori J99).